The chain runs to 288 residues: Elongation factor Ts (288 aa).

The involved in Mg(2+) ion dislocation from EF-Tu stretch occupies residues 82–85 (TDFV).

It belongs to the EF-Ts family.

The protein localises to the cytoplasm. Associates with the EF-Tu.GDP complex and induces the exchange of GDP to GTP. It remains bound to the aminoacyl-tRNA.EF-Tu.GTP complex up to the GTP hydrolysis stage on the ribosome. This is Elongation factor Ts from Prosthecochloris aestuarii (strain DSM 271 / SK 413).